Reading from the N-terminus, the 245-residue chain is 4-hydroxy-tetrahydrodipicolinate reductase (245 aa).

Residues 7 to 12 (GAKGKV), 75 to 77 (GTT), and 102 to 105 (APNF) contribute to the NAD(+) site. H132 (proton donor/acceptor) is an active-site residue. H133 contributes to the (S)-2,3,4,5-tetrahydrodipicolinate binding site. Catalysis depends on K136, which acts as the Proton donor. Residue 142 to 143 (GT) coordinates (S)-2,3,4,5-tetrahydrodipicolinate.

The protein belongs to the DapB family.

It is found in the cytoplasm. The catalysed reaction is (S)-2,3,4,5-tetrahydrodipicolinate + NAD(+) + H2O = (2S,4S)-4-hydroxy-2,3,4,5-tetrahydrodipicolinate + NADH + H(+). The enzyme catalyses (S)-2,3,4,5-tetrahydrodipicolinate + NADP(+) + H2O = (2S,4S)-4-hydroxy-2,3,4,5-tetrahydrodipicolinate + NADPH + H(+). It participates in amino-acid biosynthesis; L-lysine biosynthesis via DAP pathway; (S)-tetrahydrodipicolinate from L-aspartate: step 4/4. Catalyzes the conversion of 4-hydroxy-tetrahydrodipicolinate (HTPA) to tetrahydrodipicolinate. This chain is 4-hydroxy-tetrahydrodipicolinate reductase, found in Mycobacterium bovis (strain BCG / Pasteur 1173P2).